The chain runs to 1411 residues: Protein ECM5 (1411 aa).

Residues 118-159 (IPTFILAKKELPDPIKFYELVEDLGSVYGCVKLKIIPDADKF) form the JmjN domain. One can recognise an ARID domain in the interval 185 to 279 (RTKIVDFYAK…ILLDFDIYEE (95 aa)). Positions 285–312 (RNNEKNEDMVESEIFRHSNSRSRDEEEP) are disordered. One can recognise a JmjC domain in the interval 476–695 (KNILDQWNLD…FSSEAAKWTS (220 aa)). Residues 1238–1290 (TKYCFCRRVEEGTAMVECEICKEWYHVDCISNGELVPPDDPNVLFVCSICTPP) form a PHD-type zinc finger.

It is found in the nucleus. Functionally, may be involved in cell wall organization and biogenesis. The polypeptide is Protein ECM5 (ECM5) (Saccharomyces cerevisiae (strain ATCC 204508 / S288c) (Baker's yeast)).